The chain runs to 389 residues: Glutamate 5-kinase (389 aa).

ATP is bound at residue lysine 26. Serine 66, aspartate 153, and asparagine 167 together coordinate substrate. 187-188 contributes to the ATP binding site; sequence TD. The PUA domain occupies 293–371; it reads AGTLFLDQGA…EQIEWILGHR (79 aa).

This sequence belongs to the glutamate 5-kinase family.

It localises to the cytoplasm. It catalyses the reaction L-glutamate + ATP = L-glutamyl 5-phosphate + ADP. It functions in the pathway amino-acid biosynthesis; L-proline biosynthesis; L-glutamate 5-semialdehyde from L-glutamate: step 1/2. Its function is as follows. Catalyzes the transfer of a phosphate group to glutamate to form L-glutamate 5-phosphate. This is Glutamate 5-kinase from Rhodopirellula baltica (strain DSM 10527 / NCIMB 13988 / SH1).